The following is a 185-amino-acid chain: Ribosome-recycling factor (185 aa).

The protein belongs to the RRF family.

It localises to the cytoplasm. Responsible for the release of ribosomes from messenger RNA at the termination of protein biosynthesis. May increase the efficiency of translation by recycling ribosomes from one round of translation to another. This chain is Ribosome-recycling factor, found in Bacillus cereus (strain B4264).